The primary structure comprises 380 residues: Nucleoporin Nup43 (380 aa).

Met1 is modified (N-acetylmethionine). WD repeat units lie at residues 8 to 57 (FVSQ…NLDS), 72 to 110 (RHHGDVMDLQFFDQERIVAASSTGCVTVFLHHPNNQTLS), 119 to 166 (HYHT…AVRT), 170 to 208 (ADSSTLHAVTFLRTPEIVTVNSIGQLKIWDFRQQGSEPC), 215 to 255 (GDRV…MPVS), and 259 to 299 (AHEA…PEKS).

Component of the Nup107-160 subcomplex of the nuclear pore complex (NPC). The Nup107-160 subcomplex includes NUP160, NUP133, NUP107, NUP98, NUP85, NUP43, NUP37, SEH1 and SEC13.

It is found in the chromosome. It localises to the centromere. The protein localises to the kinetochore. Its subcellular location is the nucleus. The protein resides in the nuclear pore complex. In terms of biological role, component of the Nup107-160 subcomplex of the nuclear pore complex (NPC). The Nup107-160 subcomplex is required for the assembly of a functional NPC. The Nup107-160 subcomplex is also required for normal kinetochore microtubule attachment, mitotic progression and chromosome segregation. The polypeptide is Nucleoporin Nup43 (Nup43) (Mus musculus (Mouse)).